A 487-amino-acid polypeptide reads, in one-letter code: UDP-glucose flavonoid 3-O-glucosyltransferase 7 (487 aa).

His-23 serves as the catalytic Proton acceptor. Residue His-23 coordinates an anthocyanidin. Catalysis depends on Asp-121, which acts as the Charge relay. Ala-345, Gln-347, His-362, Trp-365, Asn-366, Ser-367, and Glu-370 together coordinate UDP-alpha-D-glucose. Gly-385 serves as a coordination point for an anthocyanidin. UDP-alpha-D-glucose is bound by residues Glu-386 and Gln-387.

It belongs to the UDP-glycosyltransferase family. As to expression, strongly expressed in achenes and receptacles.

The catalysed reaction is a flavonol + UDP-alpha-D-glucose = a flavonol 3-O-beta-D-glucoside + UDP + H(+). Broad spectrum multifunctional glucosyltransferase. Catalyzes the formation of flavonol 3-O- and 4'-O-glucosides during fruit ripening. Accepted substrates include several flavonoids, hydroxycoumarins and beta-naphthols. Uses UDP-Glc as a sugar donor, but not UDP-Gal or UDP-GlcUA. May also be involved in detoxification of xenobiotics. This is UDP-glucose flavonoid 3-O-glucosyltransferase 7 from Fragaria ananassa (Strawberry).